Here is a 176-residue protein sequence, read N- to C-terminus: ATP-dependent protease subunit HslV (176 aa).

Threonine 6 is a catalytic residue. Na(+)-binding residues include glycine 161, cysteine 164, and threonine 167.

Belongs to the peptidase T1B family. HslV subfamily. A double ring-shaped homohexamer of HslV is capped on each side by a ring-shaped HslU homohexamer. The assembly of the HslU/HslV complex is dependent on binding of ATP.

The protein localises to the cytoplasm. It carries out the reaction ATP-dependent cleavage of peptide bonds with broad specificity.. Allosterically activated by HslU binding. Functionally, protease subunit of a proteasome-like degradation complex believed to be a general protein degrading machinery. The protein is ATP-dependent protease subunit HslV of Thermotoga sp. (strain RQ2).